Here is a 361-residue protein sequence, read N- to C-terminus: 3-dehydroquinate synthase (361 aa).

NAD(+)-binding positions include aspartate 69–lysine 74, glycine 103–aspartate 107, threonine 127–threonine 128, lysine 140, lysine 149, and threonine 167–threonine 170. Zn(2+)-binding residues include glutamate 182, histidine 245, and histidine 262.

It belongs to the sugar phosphate cyclases superfamily. Dehydroquinate synthase family. Requires Co(2+) as cofactor. Zn(2+) serves as cofactor. It depends on NAD(+) as a cofactor.

It localises to the cytoplasm. It carries out the reaction 7-phospho-2-dehydro-3-deoxy-D-arabino-heptonate = 3-dehydroquinate + phosphate. It participates in metabolic intermediate biosynthesis; chorismate biosynthesis; chorismate from D-erythrose 4-phosphate and phosphoenolpyruvate: step 2/7. In terms of biological role, catalyzes the conversion of 3-deoxy-D-arabino-heptulosonate 7-phosphate (DAHP) to dehydroquinate (DHQ). The sequence is that of 3-dehydroquinate synthase from Thioalkalivibrio sulfidiphilus (strain HL-EbGR7).